Consider the following 299-residue polypeptide: GTPase Era (299 aa).

Positions 5–175 (RSGFVCFVGR…TDVLAGKLPP (171 aa)) constitute an Era-type G domain. Residues 13-20 (GRPNTGKS) are G1. Residue 13–20 (GRPNTGKS) coordinates GTP. Positions 39–43 (QTTRH) are G2. The tract at residues 60 to 63 (DTPG) is G3. GTP-binding positions include 60-64 (DTPGL) and 124-127 (TKID). The G4 stretch occupies residues 124 to 127 (TKID). The segment at 154-156 (VSA) is G5. The KH type-2 domain maps to 206–285 (VRDELPHSLA…YLDLRVKIAK (80 aa)).

It belongs to the TRAFAC class TrmE-Era-EngA-EngB-Septin-like GTPase superfamily. Era GTPase family. In terms of assembly, monomer.

Its subcellular location is the cell envelope. The protein localises to the secreted. It localises to the cell wall. In terms of biological role, exhibits GTPase activity. Binds RNA but is probably not involved in ribosome assembly in mycobacteria. This Mycobacterium sp. (strain KMS) protein is GTPase Era.